A 457-amino-acid chain; its full sequence is Bifunctional protein GlmU (457 aa).

Residues 1–230 (MSKRYAVVLA…FEESLGVNDR (230 aa)) form a pyrophosphorylase region. Residues 9 to 12 (LAAG), Lys23, Gln73, and 78 to 79 (GT) each bind UDP-N-acetyl-alpha-D-glucosamine. Asp103 contributes to the Mg(2+) binding site. Residues Gly140, Glu155, Asn170, and Asn228 each contribute to the UDP-N-acetyl-alpha-D-glucosamine site. Asn228 contacts Mg(2+). The tract at residues 231–251 (IALAEASKLMQRRINENHMRN) is linker. Residues 252 to 457 (GVTLVNPENT…GYAKHLNHGK (206 aa)) are N-acetyltransferase. 2 residues coordinate UDP-N-acetyl-alpha-D-glucosamine: Arg333 and Lys351. The active-site Proton acceptor is His363. Residues Tyr366 and Asn377 each contribute to the UDP-N-acetyl-alpha-D-glucosamine site. Residues 386–387 (NY), Ala423, and Arg440 contribute to the acetyl-CoA site.

In the N-terminal section; belongs to the N-acetylglucosamine-1-phosphate uridyltransferase family. It in the C-terminal section; belongs to the transferase hexapeptide repeat family. In terms of assembly, homotrimer. It depends on Mg(2+) as a cofactor.

Its subcellular location is the cytoplasm. It catalyses the reaction alpha-D-glucosamine 1-phosphate + acetyl-CoA = N-acetyl-alpha-D-glucosamine 1-phosphate + CoA + H(+). The catalysed reaction is N-acetyl-alpha-D-glucosamine 1-phosphate + UTP + H(+) = UDP-N-acetyl-alpha-D-glucosamine + diphosphate. It functions in the pathway nucleotide-sugar biosynthesis; UDP-N-acetyl-alpha-D-glucosamine biosynthesis; N-acetyl-alpha-D-glucosamine 1-phosphate from alpha-D-glucosamine 6-phosphate (route II): step 2/2. The protein operates within nucleotide-sugar biosynthesis; UDP-N-acetyl-alpha-D-glucosamine biosynthesis; UDP-N-acetyl-alpha-D-glucosamine from N-acetyl-alpha-D-glucosamine 1-phosphate: step 1/1. Its pathway is bacterial outer membrane biogenesis; LPS lipid A biosynthesis. Functionally, catalyzes the last two sequential reactions in the de novo biosynthetic pathway for UDP-N-acetylglucosamine (UDP-GlcNAc). The C-terminal domain catalyzes the transfer of acetyl group from acetyl coenzyme A to glucosamine-1-phosphate (GlcN-1-P) to produce N-acetylglucosamine-1-phosphate (GlcNAc-1-P), which is converted into UDP-GlcNAc by the transfer of uridine 5-monophosphate (from uridine 5-triphosphate), a reaction catalyzed by the N-terminal domain. This is Bifunctional protein GlmU from Listeria innocua serovar 6a (strain ATCC BAA-680 / CLIP 11262).